Reading from the N-terminus, the 338-residue chain is Holliday junction branch migration complex subunit RuvB (338 aa).

The segment at 1-180 is large ATPase domain (RuvB-L); it reads MERLLDNKFS…FGIIERLDYY (180 aa). ATP-binding residues include leucine 19, arginine 20, glycine 61, lysine 64, threonine 65, threonine 66, arginine 170, tyrosine 180, and arginine 217. Threonine 65 contacts Mg(2+). Residues 181–251 form a small ATPAse domain (RuvB-S) region; it reads TVEELSQIVM…VAKSGLEMFE (71 aa). A head domain (RuvB-H) region spans residues 254–338; sequence EYGLDLVDRN…FKLKESGDNR (85 aa). DNA contacts are provided by lysine 309 and arginine 314.

The protein belongs to the RuvB family. In terms of assembly, homohexamer. Forms an RuvA(8)-RuvB(12)-Holliday junction (HJ) complex. HJ DNA is sandwiched between 2 RuvA tetramers; dsDNA enters through RuvA and exits via RuvB. An RuvB hexamer assembles on each DNA strand where it exits the tetramer. Each RuvB hexamer is contacted by two RuvA subunits (via domain III) on 2 adjacent RuvB subunits; this complex drives branch migration. In the full resolvosome a probable DNA-RuvA(4)-RuvB(12)-RuvC(2) complex forms which resolves the HJ.

It localises to the cytoplasm. The catalysed reaction is ATP + H2O = ADP + phosphate + H(+). Its function is as follows. The RuvA-RuvB-RuvC complex processes Holliday junction (HJ) DNA during genetic recombination and DNA repair, while the RuvA-RuvB complex plays an important role in the rescue of blocked DNA replication forks via replication fork reversal (RFR). RuvA specifically binds to HJ cruciform DNA, conferring on it an open structure. The RuvB hexamer acts as an ATP-dependent pump, pulling dsDNA into and through the RuvAB complex. RuvB forms 2 homohexamers on either side of HJ DNA bound by 1 or 2 RuvA tetramers; 4 subunits per hexamer contact DNA at a time. Coordinated motions by a converter formed by DNA-disengaged RuvB subunits stimulates ATP hydrolysis and nucleotide exchange. Immobilization of the converter enables RuvB to convert the ATP-contained energy into a lever motion, pulling 2 nucleotides of DNA out of the RuvA tetramer per ATP hydrolyzed, thus driving DNA branch migration. The RuvB motors rotate together with the DNA substrate, which together with the progressing nucleotide cycle form the mechanistic basis for DNA recombination by continuous HJ branch migration. Branch migration allows RuvC to scan DNA until it finds its consensus sequence, where it cleaves and resolves cruciform DNA. This is Holliday junction branch migration complex subunit RuvB from Caldicellulosiruptor bescii (strain ATCC BAA-1888 / DSM 6725 / KCTC 15123 / Z-1320) (Anaerocellum thermophilum).